A 436-amino-acid chain; its full sequence is MMHYDVAVIGGGIAGYSAALRALQAGKKVVLINQGQSALHFSSGSIDVLGRLPDGSVVNQPFDALSALQQQVPEHPYSKVGRKNSEKGLMWFKRTLDSAHVPLHHEPDGANHWRITPLGTLKNTWLSQPFVYPYRGNADFSRIVIVAIDGYRDFQPAMLRDNLAQRPELANTPMLTVNVSIPGFEGFRRNPNELRSIDIARLLRQESAWNALCDQLMRVARPDDLVIMPAIMGNGDGLHLMTKLQQVTQLRFHEVPTMPPSLLGIRIEEALHRSFIQGGGVQLKGDKVIGGDFAGSRLTAIHTQNLRDFPISAEHYVMATGSYFSQGLQASQHAIQEPTFALDVQQNPDRAQWRHAQFIAAQSHPFMTFGVITDANLHPSRQGKTIDNLWCCGAMLSGYDPVFEGCGGGVAIATAYHAVEQILATYAQTKQPEVLL.

Belongs to the anaerobic G-3-P dehydrogenase subunit B family. In terms of assembly, composed of a catalytic GlpA/B dimer and of membrane bound GlpC. FMN is required as a cofactor.

It carries out the reaction a quinone + sn-glycerol 3-phosphate = dihydroxyacetone phosphate + a quinol. It functions in the pathway polyol metabolism; glycerol degradation via glycerol kinase pathway; glycerone phosphate from sn-glycerol 3-phosphate (anaerobic route): step 1/1. Functionally, conversion of glycerol 3-phosphate to dihydroxyacetone. Uses fumarate or nitrate as electron acceptor. The protein is Anaerobic glycerol-3-phosphate dehydrogenase subunit B of Vibrio cholerae serotype O1 (strain ATCC 39541 / Classical Ogawa 395 / O395).